The primary structure comprises 550 residues: Hydroxylamine reductase (550 aa).

4 residues coordinate [2Fe-2S] cluster: cysteine 3, cysteine 6, cysteine 18, and cysteine 25. 8 residues coordinate hybrid [4Fe-2O-2S] cluster: histidine 249, glutamate 273, cysteine 317, cysteine 405, cysteine 433, cysteine 458, glutamate 492, and lysine 494. Cysteine 405 carries the cysteine persulfide modification.

The protein belongs to the HCP family. The cofactor is [2Fe-2S] cluster. Hybrid [4Fe-2O-2S] cluster is required as a cofactor.

The protein localises to the cytoplasm. It carries out the reaction A + NH4(+) + H2O = hydroxylamine + AH2 + H(+). Functionally, catalyzes the reduction of hydroxylamine to form NH(3) and H(2)O. The polypeptide is Hydroxylamine reductase (Salmonella dublin (strain CT_02021853)).